The following is a 444-amino-acid chain: C4-dicarboxylate transport protein (444 aa).

The next 9 membrane-spanning stretches (helical) occupy residues 18–40 (FYSH…GHFY), 53–75 (AFIK…TGIA), 90–112 (AMLY…ANVV), 142–159 (IVGF…GAFA), 163–180 (ILQV…LAMV), 201–222 (LVAI…FTIG), 232–254 (LAML…LGAV), 327–349 (LFIA…LLVA), and 364–386 (FITL…ALIL).

The protein belongs to the dicarboxylate/amino acid:cation symporter (DAACS) (TC 2.A.23) family.

The protein localises to the cell inner membrane. Its function is as follows. Responsible for the transport of dicarboxylates such as succinate, fumarate, and malate from the periplasm across the inner membrane. This transport system plays an important role in the energy supply of rhizobium-legume symbionts. This chain is C4-dicarboxylate transport protein (dctA), found in Rhizobium leguminosarum.